We begin with the raw amino-acid sequence, 171 residues long: Shikimate kinase (171 aa).

ATP is bound at residue 14-19 (GAGKST). A Mg(2+)-binding site is contributed by serine 18. The substrate site is built by aspartate 36, arginine 60, and glycine 82. Arginine 120 contributes to the ATP binding site. Arginine 139 contributes to the substrate binding site. Residue glutamine 156 participates in ATP binding.

Belongs to the shikimate kinase family. Monomer. The cofactor is Mg(2+).

It localises to the cytoplasm. It carries out the reaction shikimate + ATP = 3-phosphoshikimate + ADP + H(+). It participates in metabolic intermediate biosynthesis; chorismate biosynthesis; chorismate from D-erythrose 4-phosphate and phosphoenolpyruvate: step 5/7. Its function is as follows. Catalyzes the specific phosphorylation of the 3-hydroxyl group of shikimic acid using ATP as a cosubstrate. This Shewanella sp. (strain MR-4) protein is Shikimate kinase.